The primary structure comprises 107 residues: uncharacterized protein (107 aa).

The disordered stretch occupies residues 1 to 32 (MDSLASGRWRRRRTEELPAAGDAKRACRRSEP). The span at 22-31 (DAKRACRRSE) shows a compositional bias: basic and acidic residues.

This is an uncharacterized protein from Mus musculus (Mouse).